We begin with the raw amino-acid sequence, 188 residues long: Small ribosomal subunit protein uS7 (188 aa).

This sequence belongs to the universal ribosomal protein uS7 family. In terms of assembly, part of the 30S ribosomal subunit.

In terms of biological role, one of the primary rRNA binding proteins, it binds directly to 16S rRNA where it nucleates assembly of the head domain of the 30S subunit. Is located at the subunit interface close to the decoding center. The sequence is that of Small ribosomal subunit protein uS7 from Methanococcus maripaludis (strain C7 / ATCC BAA-1331).